We begin with the raw amino-acid sequence, 192 residues long: Large ribosomal subunit protein uL5 (192 aa).

The protein belongs to the universal ribosomal protein uL5 family. As to quaternary structure, part of the 50S ribosomal subunit; part of the 5S rRNA/L5/L18/L25 subcomplex. Contacts the 5S rRNA and the P site tRNA. Forms a bridge to the 30S subunit in the 70S ribosome.

In terms of biological role, this is one of the proteins that bind and probably mediate the attachment of the 5S RNA into the large ribosomal subunit, where it forms part of the central protuberance. In the 70S ribosome it contacts protein S13 of the 30S subunit (bridge B1b), connecting the 2 subunits; this bridge is implicated in subunit movement. Contacts the P site tRNA; the 5S rRNA and some of its associated proteins might help stabilize positioning of ribosome-bound tRNAs. The polypeptide is Large ribosomal subunit protein uL5 (Zymomonas mobilis subsp. mobilis (strain ATCC 31821 / ZM4 / CP4)).